We begin with the raw amino-acid sequence, 943 residues long: Isoleucine--tRNA ligase (943 aa).

Positions 59-69 match the 'HIGH' region motif; that stretch reads PYANGQIHLGH. Glutamate 577 is a binding site for L-isoleucyl-5'-AMP. Residues 618 to 622 carry the 'KMSKS' region motif; the sequence is KMSKS. An ATP-binding site is contributed by lysine 621. Residues cysteine 906, cysteine 909, cysteine 926, and cysteine 929 each coordinate Zn(2+).

Belongs to the class-I aminoacyl-tRNA synthetase family. IleS type 1 subfamily. As to quaternary structure, monomer. Zn(2+) is required as a cofactor.

The protein localises to the cytoplasm. It carries out the reaction tRNA(Ile) + L-isoleucine + ATP = L-isoleucyl-tRNA(Ile) + AMP + diphosphate. Catalyzes the attachment of isoleucine to tRNA(Ile). As IleRS can inadvertently accommodate and process structurally similar amino acids such as valine, to avoid such errors it has two additional distinct tRNA(Ile)-dependent editing activities. One activity is designated as 'pretransfer' editing and involves the hydrolysis of activated Val-AMP. The other activity is designated 'posttransfer' editing and involves deacylation of mischarged Val-tRNA(Ile). This is Isoleucine--tRNA ligase from Xanthomonas axonopodis pv. citri (strain 306).